We begin with the raw amino-acid sequence, 124 residues long: S-adenosylmethionine decarboxylase proenzyme (124 aa).

Residue S63 is the Schiff-base intermediate with substrate; via pyruvic acid of the active site. The residue at position 63 (S63) is a Pyruvic acid (Ser); by autocatalysis. The active-site Proton acceptor; for processing activity is H68. C83 serves as the catalytic Proton donor; for catalytic activity.

Belongs to the prokaryotic AdoMetDC family. Type 1 subfamily. As to quaternary structure, heterotetramer of two alpha and two beta chains arranged as a dimer of alpha/beta heterodimers. Requires pyruvate as cofactor. Post-translationally, is synthesized initially as an inactive proenzyme. Formation of the active enzyme involves a self-maturation process in which the active site pyruvoyl group is generated from an internal serine residue via an autocatalytic post-translational modification. Two non-identical subunits are generated from the proenzyme in this reaction, and the pyruvate is formed at the N-terminus of the alpha chain, which is derived from the carboxyl end of the proenzyme. The post-translation cleavage follows an unusual pathway, termed non-hydrolytic serinolysis, in which the side chain hydroxyl group of the serine supplies its oxygen atom to form the C-terminus of the beta chain, while the remainder of the serine residue undergoes an oxidative deamination to produce ammonia and the pyruvoyl group blocking the N-terminus of the alpha chain.

It catalyses the reaction S-adenosyl-L-methionine + H(+) = S-adenosyl 3-(methylsulfanyl)propylamine + CO2. The protein operates within amine and polyamine biosynthesis; S-adenosylmethioninamine biosynthesis; S-adenosylmethioninamine from S-adenosyl-L-methionine: step 1/1. In terms of biological role, catalyzes the decarboxylation of S-adenosylmethionine to S-adenosylmethioninamine (dcAdoMet), the propylamine donor required for the synthesis of the polyamines spermine and spermidine from the diamine putrescine. In Geobacillus sp. (strain WCH70), this protein is S-adenosylmethionine decarboxylase proenzyme.